Consider the following 143-residue polypeptide: MMIYYRTVRLGDTDAAGVVYFATALSICHEAYEASLEQAYINLRKFFNDPEQAIPIVHGEIDFFRPLFCGEKLEIHLLARQLKDSEFEIEYQIFKGSSEGEKAARALTRHVCINPISRQRSRLPDLMVQWLARINTTESERLY.

D14 is a catalytic residue.

Belongs to the 4-hydroxybenzoyl-CoA thioesterase family. DHNA-CoA hydrolase subfamily.

It catalyses the reaction 1,4-dihydroxy-2-naphthoyl-CoA + H2O = 1,4-dihydroxy-2-naphthoate + CoA + H(+). The protein operates within cofactor biosynthesis; phylloquinone biosynthesis. It functions in the pathway quinol/quinone metabolism; 1,4-dihydroxy-2-naphthoate biosynthesis; 1,4-dihydroxy-2-naphthoate from chorismate: step 7/7. Functionally, catalyzes the hydrolysis of 1,4-dihydroxy-2-naphthoyl-CoA (DHNA-CoA) to 1,4-dihydroxy-2-naphthoate (DHNA), a reaction involved in phylloquinone (vitamin K1) biosynthesis. This Gloeothece citriformis (strain PCC 7424) (Cyanothece sp. (strain PCC 7424)) protein is 1,4-dihydroxy-2-naphthoyl-CoA hydrolase.